Here is an 82-residue protein sequence, read N- to C-terminus: Small ribosomal subunit protein uS17 (82 aa).

The protein belongs to the universal ribosomal protein uS17 family. Part of the 30S ribosomal subunit.

Its function is as follows. One of the primary rRNA binding proteins, it binds specifically to the 5'-end of 16S ribosomal RNA. This Thermosynechococcus vestitus (strain NIES-2133 / IAM M-273 / BP-1) protein is Small ribosomal subunit protein uS17.